The sequence spans 231 residues: Large ribosomal subunit protein uL1 (231 aa).

The protein belongs to the universal ribosomal protein uL1 family. Part of the 50S ribosomal subunit.

In terms of biological role, binds directly to 23S rRNA. The L1 stalk is quite mobile in the ribosome, and is involved in E site tRNA release. Protein L1 is also a translational repressor protein, it controls the translation of the L11 operon by binding to its mRNA. This is Large ribosomal subunit protein uL1 from Herminiimonas arsenicoxydans.